We begin with the raw amino-acid sequence, 609 residues long: Dihydroxy-acid dehydratase (609 aa).

Asp-81 contributes to the Mg(2+) binding site. Cys-122 lines the [2Fe-2S] cluster pocket. 2 residues coordinate Mg(2+): Asp-123 and Lys-124. At Lys-124 the chain carries N6-carboxylysine. Residue Cys-195 participates in [2Fe-2S] cluster binding. A Mg(2+)-binding site is contributed by Glu-491. Residue Ser-517 is the Proton acceptor of the active site.

This sequence belongs to the IlvD/Edd family. As to quaternary structure, homodimer. [2Fe-2S] cluster is required as a cofactor. The cofactor is Mg(2+).

It carries out the reaction (2R)-2,3-dihydroxy-3-methylbutanoate = 3-methyl-2-oxobutanoate + H2O. It catalyses the reaction (2R,3R)-2,3-dihydroxy-3-methylpentanoate = (S)-3-methyl-2-oxopentanoate + H2O. It participates in amino-acid biosynthesis; L-isoleucine biosynthesis; L-isoleucine from 2-oxobutanoate: step 3/4. The protein operates within amino-acid biosynthesis; L-valine biosynthesis; L-valine from pyruvate: step 3/4. In terms of biological role, functions in the biosynthesis of branched-chain amino acids. Catalyzes the dehydration of (2R,3R)-2,3-dihydroxy-3-methylpentanoate (2,3-dihydroxy-3-methylvalerate) into 2-oxo-3-methylpentanoate (2-oxo-3-methylvalerate) and of (2R)-2,3-dihydroxy-3-methylbutanoate (2,3-dihydroxyisovalerate) into 2-oxo-3-methylbutanoate (2-oxoisovalerate), the penultimate precursor to L-isoleucine and L-valine, respectively. The protein is Dihydroxy-acid dehydratase of Acinetobacter baumannii (strain AB0057).